The chain runs to 123 residues: Small ribosomal subunit protein uS12 (123 aa).

The disordered stretch occupies residues 11–32 (PRQEKTYREKARHLGASPQKRG). Asp-89 carries the post-translational modification 3-methylthioaspartic acid.

It belongs to the universal ribosomal protein uS12 family. Part of the 30S ribosomal subunit. Contacts proteins S8 and S17. May interact with IF1 in the 30S initiation complex.

With S4 and S5 plays an important role in translational accuracy. Its function is as follows. Interacts with and stabilizes bases of the 16S rRNA that are involved in tRNA selection in the A site and with the mRNA backbone. Located at the interface of the 30S and 50S subunits, it traverses the body of the 30S subunit contacting proteins on the other side and probably holding the rRNA structure together. The combined cluster of proteins S8, S12 and S17 appears to hold together the shoulder and platform of the 30S subunit. This Methylocella silvestris (strain DSM 15510 / CIP 108128 / LMG 27833 / NCIMB 13906 / BL2) protein is Small ribosomal subunit protein uS12.